Reading from the N-terminus, the 438-residue chain is Gamma-glutamyl phosphate reductase (438 aa).

The segment at 1-21 (MTAQTSSDVTDQKTDLTRESE) is disordered. Positions 10-21 (TDQKTDLTRESE) are enriched in basic and acidic residues.

It belongs to the gamma-glutamyl phosphate reductase family.

The protein localises to the cytoplasm. The enzyme catalyses L-glutamate 5-semialdehyde + phosphate + NADP(+) = L-glutamyl 5-phosphate + NADPH + H(+). It functions in the pathway amino-acid biosynthesis; L-proline biosynthesis; L-glutamate 5-semialdehyde from L-glutamate: step 2/2. Catalyzes the NADPH-dependent reduction of L-glutamate 5-phosphate into L-glutamate 5-semialdehyde and phosphate. The product spontaneously undergoes cyclization to form 1-pyrroline-5-carboxylate. In Corynebacterium efficiens (strain DSM 44549 / YS-314 / AJ 12310 / JCM 11189 / NBRC 100395), this protein is Gamma-glutamyl phosphate reductase.